A 151-amino-acid polypeptide reads, in one-letter code: Probable transport accessory protein MmpS1 (151 aa).

A run of 2 helical transmembrane segments spans residues 8 to 28 (FWIP…VSRL) and 81 to 101 (VVNA…AVVA).

Belongs to the MmpS family.

The protein resides in the cell membrane. In Mycobacterium tuberculosis (strain CDC 1551 / Oshkosh), this protein is Probable transport accessory protein MmpS1 (mmpS1).